Consider the following 357-residue polypeptide: GDSL esterase/lipase At5g45950 (357 aa).

The signal sequence occupies residues Met-1–Ser-23. An N-linked (GlcNAc...) asparagine glycan is attached at Asn-37. Catalysis depends on Ser-47, which acts as the Nucleophile. Asn-132 is a glycosylation site (N-linked (GlcNAc...) asparagine). Residues Asp-331 and His-334 contribute to the active site.

The protein belongs to the 'GDSL' lipolytic enzyme family.

It is found in the secreted. The polypeptide is GDSL esterase/lipase At5g45950 (Arabidopsis thaliana (Mouse-ear cress)).